Consider the following 280-residue polypeptide: Delta(3,5)-Delta(2,4)-dienoyl-CoA isomerase (280 aa).

Glutamate 154 functions as the Proton donor/acceptor in the catalytic mechanism. The short motif at 278–280 (HKL) is the Peroxisome targeting signal (PTS1) element.

It belongs to the enoyl-CoA hydratase/isomerase family.

The protein resides in the cytoplasm. It is found in the cytosol. The protein localises to the peroxisome. The catalysed reaction is a (3E,5Z)-dienoyl-CoA = a (2E,4E)-(5,6-saturated)-dienoyl-CoA. It participates in lipid metabolism; fatty acid beta-oxidation. Its function is as follows. Peroxisomal di-isomerase that is involved in fatty acid metabolism enzyme by converting 3,5-dienoyl-CoAs to the corresponding 2,4-dienoyl-CoAs. Involved in fatty acid beta-oxidation, which is important for lipid droplets degradation and infectious growth. The protein is Delta(3,5)-Delta(2,4)-dienoyl-CoA isomerase of Pyricularia oryzae (strain 70-15 / ATCC MYA-4617 / FGSC 8958) (Rice blast fungus).